Consider the following 926-residue polypeptide: Alpha-L-rhamnosidase (926 aa).

Positions 1–25 (MILHKSVFKSYIYVLTYFVFFSVMS) are cleaved as a signal peptide. Cysteine 26 carries the N-palmitoyl cysteine lipid modification. Cysteine 26 is lipidated: S-diacylglycerol cysteine. Residues aspartate 504, 508 to 510 (RDE), aspartate 517, and tryptophan 569 contribute to the alpha-L-rhamnose site. Catalysis depends on glutamate 510, which acts as the Proton donor. Residue glutamate 779 is the Proton acceptor of the active site. Residue histidine 800 coordinates alpha-L-rhamnose.

The protein belongs to the glycosyl hydrolase 78 family.

Its subcellular location is the cell membrane. The enzyme catalyses Hydrolysis of terminal non-reducing alpha-L-rhamnose residues in alpha-L-rhamnosides.. Its function is as follows. Alpha-L-rhamnosidase involved in ulvan degradation. Ulvan is the main polysaccharide component of the Ulvales (green seaweed) cell wall. It is composed of disaccharide building blocks comprising 3-sulfated rhamnose (Rha3S) linked to D-glucuronic acid (GlcA), L-iduronic acid (IduA), or D-xylose (Xyl). Alpha-L-rhamnosidase converts Rha-Xyl-Rha3S, the product of a sulfatase acting on Rha3S-Xyl-Rha3S oligosaccharides, to Rha and Xyl-Rha3S. The enzyme is able to degrade p-nitrophenyl-alpha-L-rhamnopyranoside (PNP-Rha) in vitro. This chain is Alpha-L-rhamnosidase, found in Formosa agariphila (strain DSM 15362 / KCTC 12365 / LMG 23005 / KMM 3901 / M-2Alg 35-1).